Reading from the N-terminus, the 213-residue chain is Pyridoxine/pyridoxamine 5'-phosphate oxidase 2 (213 aa).

Substrate contacts are provided by residues 9–12 and Lys67; that span reads RQRY. FMN-binding positions include 62 to 67, 77 to 78, Lys84, and Gln106; these read RTVLLK and FT. Substrate contacts are provided by Tyr124, Arg128, and Ser132. FMN contacts are provided by residues 141–142 and Trp186; that span reads QS. Substrate is bound at residue 192-194; the sequence is RLH. An FMN-binding site is contributed by Arg196.

The protein belongs to the pyridoxamine 5'-phosphate oxidase family. Homodimer. It depends on FMN as a cofactor.

It carries out the reaction pyridoxamine 5'-phosphate + O2 + H2O = pyridoxal 5'-phosphate + H2O2 + NH4(+). It catalyses the reaction pyridoxine 5'-phosphate + O2 = pyridoxal 5'-phosphate + H2O2. It participates in cofactor metabolism; pyridoxal 5'-phosphate salvage; pyridoxal 5'-phosphate from pyridoxamine 5'-phosphate: step 1/1. It functions in the pathway cofactor metabolism; pyridoxal 5'-phosphate salvage; pyridoxal 5'-phosphate from pyridoxine 5'-phosphate: step 1/1. Catalyzes the oxidation of either pyridoxine 5'-phosphate (PNP) or pyridoxamine 5'-phosphate (PMP) into pyridoxal 5'-phosphate (PLP). In Hydrogenovibrio crunogenus (strain DSM 25203 / XCL-2) (Thiomicrospira crunogena), this protein is Pyridoxine/pyridoxamine 5'-phosphate oxidase 2.